Here is a 239-residue protein sequence, read N- to C-terminus: MAIALWYCPPQGSVAYETLQMLIFSFQTLFPDSPVFEPHVTVTSHLVCNSKDDVNKILTSCVAAIQSIRSHQTAKKGRKGQVSHAVAAPLVSFNGCSVGKQYFKKIVLECNKNKILYGVAQVMREMYVEIDPETRSSRAATWVHEEFHPHVSLLYSDIHPVSQASLRVVQQRIEDALDVQLVPREKRKGSGNADGSNEVQMRWDFDVSSSLSWNIPGTFKVVNCVGPVQEWEVLGRVDV.

Active-site proton donor/acceptor residues include histidine 39 and histidine 150.

Belongs to the 2H phosphoesterase superfamily. CPD1 family.

It is found in the golgi apparatus. It carries out the reaction ADP-alpha-D-ribose 1'',2''-cyclic phosphate + H2O = ADP-alpha-D-ribose 1''-phosphate + H(+). The enzyme catalyses 2',3'-cyclophospho-AMP + H2O = adenosine 2'-phosphate + H(+). It catalyses the reaction 2',3'-cyclophospho-GMP + H2O = guanosine 2'-phosphate + H(+). The catalysed reaction is 2',3'-cyclophospho-UMP + H2O = uridine 2'-phosphate + H(+). It carries out the reaction 2',3'-cyclophospho-CMP + H2O = cytidine 2'-phosphate + H(+). The enzyme catalyses a nucleoside 2',3'-cyclic phosphate + H2O = a nucleoside 2'-phosphate + H(+). Its function is as follows. Involved in the metabolism of ADP-ribose 1',2'-cyclic phosphate which is produced as a consequence of tRNA splicing. In Saccharomyces cerevisiae (strain ATCC 204508 / S288c) (Baker's yeast), this protein is 2',3'-cyclic-nucleotide 3'-phosphodiesterase.